The following is a 285-amino-acid chain: Nucleotide-binding protein Pmen_0867 (285 aa).

8–15 (GRSGSGKS) contacts ATP. 60–63 (DARN) contacts GTP.

The protein belongs to the RapZ-like family.

Its function is as follows. Displays ATPase and GTPase activities. In Ectopseudomonas mendocina (strain ymp) (Pseudomonas mendocina), this protein is Nucleotide-binding protein Pmen_0867.